The following is a 235-amino-acid chain: Glucosamine-6-phosphate deaminase (235 aa).

The active-site Proton acceptor; for enolization step is Asp62. Asn128 (for ring-opening step) is an active-site residue. His130 acts as the Proton acceptor; for ring-opening step in catalysis. Catalysis depends on Glu135, which acts as the For ring-opening step.

The protein belongs to the glucosamine/galactosamine-6-phosphate isomerase family. NagB subfamily.

The catalysed reaction is alpha-D-glucosamine 6-phosphate + H2O = beta-D-fructose 6-phosphate + NH4(+). It participates in amino-sugar metabolism; N-acetylneuraminate degradation; D-fructose 6-phosphate from N-acetylneuraminate: step 5/5. Functionally, catalyzes the reversible isomerization-deamination of glucosamine 6-phosphate (GlcN6P) to form fructose 6-phosphate (Fru6P) and ammonium ion. This Streptococcus gordonii (strain Challis / ATCC 35105 / BCRC 15272 / CH1 / DL1 / V288) protein is Glucosamine-6-phosphate deaminase.